Here is an 85-residue protein sequence, read N- to C-terminus: MTILSAITSISRPNKISKSVVSSNGGASLSMGSNSVACGGCGGGSSVLIAAGGSGGLFVGAAVAVDLSIHASVGIAIGSTSCHCN.

This sequence belongs to the hssA/B family.

In Dictyostelium discoideum (Social amoeba), this protein is HssA/B-like protein 62 (hssl62).